Reading from the N-terminus, the 306-residue chain is Elongation factor Ts (306 aa).

The segment at 80–83 (TDFV) is involved in Mg(2+) ion dislocation from EF-Tu.

This sequence belongs to the EF-Ts family.

The protein resides in the cytoplasm. Functionally, associates with the EF-Tu.GDP complex and induces the exchange of GDP to GTP. It remains bound to the aminoacyl-tRNA.EF-Tu.GTP complex up to the GTP hydrolysis stage on the ribosome. This Clostridium kluyveri (strain NBRC 12016) protein is Elongation factor Ts.